The following is a 357-amino-acid chain: Aminomethyltransferase (357 aa).

This sequence belongs to the GcvT family. In terms of assembly, the glycine cleavage system is composed of four proteins: P, T, L and H.

The catalysed reaction is N(6)-[(R)-S(8)-aminomethyldihydrolipoyl]-L-lysyl-[protein] + (6S)-5,6,7,8-tetrahydrofolate = N(6)-[(R)-dihydrolipoyl]-L-lysyl-[protein] + (6R)-5,10-methylene-5,6,7,8-tetrahydrofolate + NH4(+). Functionally, the glycine cleavage system catalyzes the degradation of glycine. This is Aminomethyltransferase from Deinococcus deserti (strain DSM 17065 / CIP 109153 / LMG 22923 / VCD115).